The sequence spans 282 residues: Exo-glucosaminidase LytG (282 aa).

Residues methionine 1–alanine 29 form the signal peptide. The GW domain occupies serine 203–alanine 281.

This sequence belongs to the glycosyl hydrolase 73 family. It depends on Mg(2+) as a cofactor.

The protein resides in the secreted. It is found in the cell wall. Inhibited by EDTA. In terms of biological role, is the major glucosaminidase responsible for peptidoglycan structural determination during vegetative growth. Catalyzes the hydrolysis of 1,4-beta-linkages between N-acetyl-D-glucosamine and N-acetylmuramic acid residues in peptidoglycan. Acts processively from the ends of the glycan strands. Also plays a role in motility, chemotaxis and cell division. The sequence is that of Exo-glucosaminidase LytG (lytG) from Bacillus subtilis (strain 168).